The primary structure comprises 149 residues: Transcriptional repressor NrdR (149 aa).

A zinc finger spans residues 3 to 34; the sequence is CPFCSAVDTKVIDSRLVAEGHQVRRRRECLLC. Residues 49-139 form the ATP-cone domain; the sequence is PRVIKSNGSR…VYRSFEDIRE (91 aa).

The protein belongs to the NrdR family. Zn(2+) serves as cofactor.

Its function is as follows. Negatively regulates transcription of bacterial ribonucleotide reductase nrd genes and operons by binding to NrdR-boxes. In Aeromonas salmonicida (strain A449), this protein is Transcriptional repressor NrdR.